A 140-amino-acid polypeptide reads, in one-letter code: Large ribosomal subunit protein bL17 (140 aa).

A disordered region spans residues 121 to 140 (AAKGLDSGPTAEANDDDSEE).

Belongs to the bacterial ribosomal protein bL17 family. As to quaternary structure, part of the 50S ribosomal subunit. Contacts protein L32.

This is Large ribosomal subunit protein bL17 from Rhodospirillum rubrum (strain ATCC 11170 / ATH 1.1.1 / DSM 467 / LMG 4362 / NCIMB 8255 / S1).